Consider the following 718-residue polypeptide: 1-deoxy-D-xylulose-5-phosphate synthase 1, chloroplastic (718 aa).

The N-terminal 55 residues, 1–55, are a transit peptide targeting the chloroplast; that stretch reads MAFCALSFPAHISRATTPAPSDLQKSSSFSSRFYWGADLLRPSQYKVRKIQSGVY. Thiamine diphosphate is bound by residues H143 and 184 to 186; that span reads GHS. Position 215 (D215) interacts with Mg(2+). Thiamine diphosphate is bound by residues 216–217, N244, Y365, and E447; that span reads GA. N244 is a binding site for Mg(2+).

Belongs to the transketolase family. DXPS subfamily. In terms of assembly, homodimer. Mg(2+) is required as a cofactor. Thiamine diphosphate serves as cofactor. As to expression, expressed in trichomes, leaves, flowers, roots and stems.

It is found in the plastid. Its subcellular location is the chloroplast. It catalyses the reaction D-glyceraldehyde 3-phosphate + pyruvate + H(+) = 1-deoxy-D-xylulose 5-phosphate + CO2. It participates in metabolic intermediate biosynthesis; 1-deoxy-D-xylulose 5-phosphate biosynthesis; 1-deoxy-D-xylulose 5-phosphate from D-glyceraldehyde 3-phosphate and pyruvate: step 1/1. Catalyzes the acyloin condensation reaction between C atoms 2 and 3 of pyruvate and glyceraldehyde 3-phosphate to yield 1-deoxy-D-xylulose-5-phosphate (DXP). The polypeptide is 1-deoxy-D-xylulose-5-phosphate synthase 1, chloroplastic (Cannabis sativa (Hemp)).